The following is a 137-amino-acid chain: Gonadotropin subunit beta-1 (137 aa).

Residues 1–24 (MYCTHLRMLQLVVMATLWVTPVRA) form the signal peptide. 5 disulfide bridges follow: cysteine 32–cysteine 78, cysteine 46–cysteine 93, cysteine 55–cysteine 108, cysteine 59–cysteine 110, and cysteine 113–cysteine 120. N-linked (GlcNAc...) asparagine glycosylation occurs at asparagine 36.

The protein belongs to the glycoprotein hormones subunit beta family. In terms of assembly, heterodimer of an alpha and a beta chain.

The protein localises to the secreted. In terms of biological role, involved in gametogenesis and steroidogenesis. The chain is Gonadotropin subunit beta-1 (cgba) from Coregonus autumnalis (Arctic cisco).